The primary structure comprises 287 residues: 4-hydroxybenzoate octaprenyltransferase (287 aa).

Transmembrane regions (helical) follow at residues 22 to 42 (IGTL…AQGF), 45 to 65 (LGVL…GCVI), 91 to 111 (TSTE…LLVL), 114 to 134 (NSLT…YPFM), 139 to 159 (QLPQ…AFAA), 161 to 181 (ANAL…WTIA), 212 to 232 (IIIA…GWLE), 236 to 256 (WIYF…QLQI), and 267 to 287 (AFLD…LGYL).

Belongs to the UbiA prenyltransferase family. Mg(2+) serves as cofactor.

It localises to the cell inner membrane. The catalysed reaction is all-trans-octaprenyl diphosphate + 4-hydroxybenzoate = 4-hydroxy-3-(all-trans-octaprenyl)benzoate + diphosphate. The protein operates within cofactor biosynthesis; ubiquinone biosynthesis. Functionally, catalyzes the prenylation of para-hydroxybenzoate (PHB) with an all-trans polyprenyl group. Mediates the second step in the final reaction sequence of ubiquinone-8 (UQ-8) biosynthesis, which is the condensation of the polyisoprenoid side chain with PHB, generating the first membrane-bound Q intermediate 3-octaprenyl-4-hydroxybenzoate. The chain is 4-hydroxybenzoate octaprenyltransferase from Psychromonas ingrahamii (strain DSM 17664 / CCUG 51855 / 37).